The following is a 57-amino-acid chain: Small ribosomal subunit protein eS27 (57 aa).

Positions 10, 13, 29, and 32 each coordinate Zn(2+). Residues 10-32 (CGDCENEQVVFGKASSVVSCAVC) form a C4-type zinc finger.

It belongs to the eukaryotic ribosomal protein eS27 family. Part of the 30S ribosomal subunit. Zn(2+) is required as a cofactor.

The chain is Small ribosomal subunit protein eS27 from Halorubrum lacusprofundi (strain ATCC 49239 / DSM 5036 / JCM 8891 / ACAM 34).